Here is a 506-residue protein sequence, read N- to C-terminus: Pisatin demethylase (506 aa).

A heme-binding site is contributed by Cys453.

This sequence belongs to the cytochrome P450 family. Heme is required as a cofactor.

In terms of biological role, can detoxify the phytoalexin pisatin from garden pea. Pisatin is an antimicrobial compound produced by pea in response to infection by plant pathogens. The chain is Pisatin demethylase (PDA6-1) from Fusarium vanettenii (Neocosmospora pisi).